Consider the following 657-residue polypeptide: Protein PSK SIMULATOR 1 (657 aa).

Polar residues-rich tracts occupy residues 1–15 (MGGL…NNAP), 26–39 (HLNN…SHSG), 62–76 (ESFS…SHPQ), and 540–556 (RSPN…SHNP). Disordered regions lie at residues 1–80 (MGGL…NIED) and 534–559 (PVKS…PSMG). Residue glycine 2 is the site of N-myristoyl glycine attachment.

The protein resides in the nucleus. Functionally, promotes seedling growth probably via the regulation of phytosulfokine (PSK) signaling; PSK are peptide phytohormones acting as growth factors. Together with PSI2 and PSI3, required during vegetative growth and reproduction. May also have a function in carbohydrate metabolism. This is Protein PSK SIMULATOR 1 from Arabidopsis thaliana (Mouse-ear cress).